Here is a 452-residue protein sequence, read N- to C-terminus: tRNA modification GTPase MnmE (452 aa).

(6S)-5-formyl-5,6,7,8-tetrahydrofolate is bound by residues Arg22, Glu79, and Lys119. In terms of domain architecture, TrmE-type G spans 215 to 375 (GMKVVIAGRP…LRQHLKQSMG (161 aa)). K(+) is bound at residue Asn225. GTP is bound by residues 225–230 (NAGKSS), 244–250 (TDIAGTT), 269–272 (DTAG), and 333–336 (NKAD). Ser229 is a Mg(2+) binding site. Residues Thr244, Ile246, and Thr249 each contribute to the K(+) site. Thr250 is a binding site for Mg(2+). Lys452 is a (6S)-5-formyl-5,6,7,8-tetrahydrofolate binding site.

Belongs to the TRAFAC class TrmE-Era-EngA-EngB-Septin-like GTPase superfamily. TrmE GTPase family. In terms of assembly, homodimer. Heterotetramer of two MnmE and two MnmG subunits. Requires K(+) as cofactor.

Its subcellular location is the cytoplasm. Functionally, exhibits a very high intrinsic GTPase hydrolysis rate. Involved in the addition of a carboxymethylaminomethyl (cmnm) group at the wobble position (U34) of certain tRNAs, forming tRNA-cmnm(5)s(2)U34. The sequence is that of tRNA modification GTPase MnmE from Histophilus somni (strain 129Pt) (Haemophilus somnus).